Here is a 724-residue protein sequence, read N- to C-terminus: Ribosomal RNA large subunit methyltransferase K/L (724 aa).

Positions 42-153 constitute a THUMP domain; the sequence is DAQRLVLWSR…KGRATLSVDL (112 aa).

It belongs to the methyltransferase superfamily. RlmKL family.

The protein localises to the cytoplasm. The enzyme catalyses guanosine(2445) in 23S rRNA + S-adenosyl-L-methionine = N(2)-methylguanosine(2445) in 23S rRNA + S-adenosyl-L-homocysteine + H(+). It carries out the reaction guanosine(2069) in 23S rRNA + S-adenosyl-L-methionine = N(2)-methylguanosine(2069) in 23S rRNA + S-adenosyl-L-homocysteine + H(+). In terms of biological role, specifically methylates the guanine in position 2445 (m2G2445) and the guanine in position 2069 (m7G2069) of 23S rRNA. The chain is Ribosomal RNA large subunit methyltransferase K/L from Xylella fastidiosa (strain M12).